Consider the following 212-residue polypeptide: Casparian strip membrane protein 1 (212 aa).

The tract at residues 1–28 (MDSSNSTKETGDIPIPVTSSKSSKAAPP) is disordered. Topologically, residues 1–49 (MDSSNSTKETGDIPIPVTSSKSSKAAPPPVVAAKAKSTTKQPLVSGWKR) are cytoplasmic. Positions 16–28 (PVTSSKSSKAAPP) are enriched in low complexity. A helical transmembrane segment spans residues 50 to 70 (GLGIIDFILRICAIAAALAAA). Residues 71–100 (TAMGTTSQQLPFFTQFFQFKADYNDLPAFT) are Extracellular-facing. The chain crosses the membrane as a helical span at residues 101 to 121 (FFVIANAMAGAYLVLSLPFSI). Residues 122–133 (LCIVRPHILGAR) lie on the Cytoplasmic side of the membrane. Residues 134-154 (LMLLVFDTVAVPLVTAAASAA) traverse the membrane as a helical segment. Residues 155-186 (ASIVYLAHNGNSDANWVAICRQFNDFCQRVSG) lie on the Extracellular side of the membrane. Residues 187-207 (AVVASFITALLFVVLVAVSAV) form a helical membrane-spanning segment. The Cytoplasmic portion of the chain corresponds to 208–212 (ALRQK).

Belongs to the Casparian strip membrane proteins (CASP) family. Homodimer and heterodimers.

It is found in the cell membrane. In terms of biological role, regulates membrane-cell wall junctions and localized cell wall deposition. Required for establishment of the Casparian strip membrane domain (CSD) and the subsequent formation of Casparian strips, a cell wall modification of the root endodermis that determines an apoplastic barrier between the intraorganismal apoplasm and the extraorganismal apoplasm and prevents lateral diffusion. This chain is Casparian strip membrane protein 1, found in Helianthus annuus (Common sunflower).